Consider the following 414-residue polypeptide: Stork-head box protein ham-1 (414 aa).

The segment at 1–31 is essential for association with cell cortex; it reads MTYLAVVLNGPKAKNGRKVFDSFLEQNRQMF. In terms of domain architecture, Winged helix Storkhead-box1 spans 93–170; the sequence is QQVEQMHFVP…MADHYFVSVP (78 aa). The interval 282–362 is disordered; that stretch reads ECQRKARRRN…SNEEAGSISD (81 aa). The interval 285–295 is bi-partite nuclear localization signal; sequence RKARRRNHPRR. The tract at residues 321–327 is nuclear localization signal; the sequence is PTRRRAR. Positions 332–351 are enriched in polar residues; sequence LRSSTPNNSDSAYSISPPHT.

It is found in the cytoplasm. Its subcellular location is the cell cortex. The protein localises to the nucleus. Probable transcription factor. Required for asymmetric cell division in neuroblasts, perhaps acting by regulating spindle positioning and myosin polarization, and thus the position of the cleavage plane. Required to produce daughter cell size asymmetry in neuroblasts undergoing asymmetric cell division, usually giving rise to one precursor cell and one apoptotic cell. Positively modulates expression of the serine/threonine kinase pig-1/MELK during asymmetric division of the Q.a neuroblast. Plays a role in neural fate specification in several dopaminergic lineages, including the hermaphrodite-specific neuron (HSN)/phasmid neuron (PHB), acting in concert with the kinase, ham-1, and the T-box protein tbx-2 and the homeobox protein egl-5. The chain is Stork-head box protein ham-1 from Caenorhabditis elegans.